The following is a 245-amino-acid chain: MSHTKIMSTDQLETQITELDNLPEHREIVTFMRRSAPLNTSQRSALEQYQDLILEYPVGDLRQHFEHPEHPLTVEIGFGMGRSLVLMAKAHPERNFVGIEVHVPGIAQCVYEAGMAGLKNLRVLDADAIQVLREMPDNSINCVQLYFPDPWQKKRHFKRRFVIHERMQLVEQKLELGGTFHAATDWEPYAEWMLDVLDNRPALENLAGKGNSYPRPEWRPQTKFERRGIESGHKINDFIFKKIGS.

Residues Glu75, Glu100, Asp127, and Asp149 each coordinate S-adenosyl-L-methionine. Asp149 is an active-site residue. Substrate is bound by residues Lys153, Asp185, and 222 to 225; that span reads TKFE.

The protein belongs to the class I-like SAM-binding methyltransferase superfamily. TrmB family.

The enzyme catalyses guanosine(46) in tRNA + S-adenosyl-L-methionine = N(7)-methylguanosine(46) in tRNA + S-adenosyl-L-homocysteine. It participates in tRNA modification; N(7)-methylguanine-tRNA biosynthesis. Functionally, catalyzes the formation of N(7)-methylguanine at position 46 (m7G46) in tRNA. The sequence is that of tRNA (guanine-N(7)-)-methyltransferase from Acinetobacter baylyi (strain ATCC 33305 / BD413 / ADP1).